The following is an 89-amino-acid chain: Small ribosomal subunit protein uS17 (89 aa).

The protein belongs to the universal ribosomal protein uS17 family. In terms of assembly, part of the 30S ribosomal subunit.

Its function is as follows. One of the primary rRNA binding proteins, it binds specifically to the 5'-end of 16S ribosomal RNA. The sequence is that of Small ribosomal subunit protein uS17 from Azoarcus sp. (strain BH72).